The sequence spans 103 residues: NADH-quinone oxidoreductase subunit K 1 (103 aa).

Transmembrane regions (helical) follow at residues 7–27 (ISWFLTLSAILFALGVAGFLF), 31–51 (IITVFMSIELMLNAVNLSFVT), and 63–83 (LFTFFVMVVAAAEAAVGLAII).

This sequence belongs to the complex I subunit 4L family. As to quaternary structure, NDH-1 is composed of 14 different subunits. Subunits NuoA, H, J, K, L, M, N constitute the membrane sector of the complex.

It localises to the cell inner membrane. It catalyses the reaction a quinone + NADH + 5 H(+)(in) = a quinol + NAD(+) + 4 H(+)(out). Functionally, NDH-1 shuttles electrons from NADH, via FMN and iron-sulfur (Fe-S) centers, to quinones in the respiratory chain. The immediate electron acceptor for the enzyme in this species is believed to be ubiquinone. Couples the redox reaction to proton translocation (for every two electrons transferred, four hydrogen ions are translocated across the cytoplasmic membrane), and thus conserves the redox energy in a proton gradient. The sequence is that of NADH-quinone oxidoreductase subunit K 1 from Solibacter usitatus (strain Ellin6076).